The sequence spans 288 residues: 4-diphosphocytidyl-2-C-methyl-D-erythritol kinase (288 aa).

Residue Lys-11 is part of the active site. 100–110 (PIAAGLGSGSS) serves as a coordination point for ATP. The active site involves Asp-140.

The protein belongs to the GHMP kinase family. IspE subfamily.

It catalyses the reaction 4-CDP-2-C-methyl-D-erythritol + ATP = 4-CDP-2-C-methyl-D-erythritol 2-phosphate + ADP + H(+). Its pathway is isoprenoid biosynthesis; isopentenyl diphosphate biosynthesis via DXP pathway; isopentenyl diphosphate from 1-deoxy-D-xylulose 5-phosphate: step 3/6. In terms of biological role, catalyzes the phosphorylation of the position 2 hydroxy group of 4-diphosphocytidyl-2C-methyl-D-erythritol. This chain is 4-diphosphocytidyl-2-C-methyl-D-erythritol kinase, found in Wolbachia sp. subsp. Drosophila simulans (strain wRi).